The chain runs to 371 residues: Peptide chain release factor 2 (371 aa).

Gln-251 is subject to N5-methylglutamine.

Belongs to the prokaryotic/mitochondrial release factor family. In terms of processing, methylated by PrmC. Methylation increases the termination efficiency of RF2.

Its subcellular location is the cytoplasm. Peptide chain release factor 2 directs the termination of translation in response to the peptide chain termination codons UGA and UAA. The sequence is that of Peptide chain release factor 2 from Pseudarthrobacter chlorophenolicus (strain ATCC 700700 / DSM 12829 / CIP 107037 / JCM 12360 / KCTC 9906 / NCIMB 13794 / A6) (Arthrobacter chlorophenolicus).